The following is a 729-amino-acid chain: Fatty acid oxidation complex subunit alpha (729 aa).

The tract at residues 1–189 is enoyl-CoA hydratase/isomerase; sequence MLYKGDTLYL…KIGLVDGVVK (189 aa). Asp-296 serves as a coordination point for substrate. The tract at residues 311–729 is 3-hydroxyacyl-CoA dehydrogenase; that stretch reads ETPKQAAVLG…ARPVGDLKTA (419 aa). NAD(+)-binding positions include Met-324, Asp-343, 400-402, Lys-407, and Ser-429; that span reads VVE. Residue His-450 is the For 3-hydroxyacyl-CoA dehydrogenase activity of the active site. Asn-453 serves as a coordination point for NAD(+). Substrate is bound by residues Asn-500 and Tyr-660. Positions 708-729 are disordered; that stretch reads RHNEPYYPPVEPARPVGDLKTA.

It in the N-terminal section; belongs to the enoyl-CoA hydratase/isomerase family. The protein in the C-terminal section; belongs to the 3-hydroxyacyl-CoA dehydrogenase family. Heterotetramer of two alpha chains (FadB) and two beta chains (FadA).

The enzyme catalyses a (3S)-3-hydroxyacyl-CoA + NAD(+) = a 3-oxoacyl-CoA + NADH + H(+). It catalyses the reaction a (3S)-3-hydroxyacyl-CoA = a (2E)-enoyl-CoA + H2O. The catalysed reaction is a 4-saturated-(3S)-3-hydroxyacyl-CoA = a (3E)-enoyl-CoA + H2O. It carries out the reaction (3S)-3-hydroxybutanoyl-CoA = (3R)-3-hydroxybutanoyl-CoA. The enzyme catalyses a (3Z)-enoyl-CoA = a 4-saturated (2E)-enoyl-CoA. It catalyses the reaction a (3E)-enoyl-CoA = a 4-saturated (2E)-enoyl-CoA. It functions in the pathway lipid metabolism; fatty acid beta-oxidation. Its function is as follows. Involved in the aerobic and anaerobic degradation of long-chain fatty acids via beta-oxidation cycle. Catalyzes the formation of 3-oxoacyl-CoA from enoyl-CoA via L-3-hydroxyacyl-CoA. It can also use D-3-hydroxyacyl-CoA and cis-3-enoyl-CoA as substrate. The protein is Fatty acid oxidation complex subunit alpha of Escherichia coli (strain UTI89 / UPEC).